A 342-amino-acid polypeptide reads, in one-letter code: Glycerol-1-phosphate dehydrogenase [NAD(P)+] (342 aa).

NAD(+) is bound by residues 84–88 (GRPID) and 106–109 (TSAS). Substrate is bound at residue aspartate 111. Serine 115 is a binding site for NAD(+). Substrate is bound at residue aspartate 160. Residues aspartate 160 and histidine 241 each contribute to the Zn(2+) site. Histidine 245 contributes to the substrate binding site. Histidine 260 is a Zn(2+) binding site.

The protein belongs to the glycerol-1-phosphate dehydrogenase family. In terms of assembly, homodimer. The cofactor is Zn(2+).

The protein resides in the cytoplasm. The catalysed reaction is sn-glycerol 1-phosphate + NAD(+) = dihydroxyacetone phosphate + NADH + H(+). It catalyses the reaction sn-glycerol 1-phosphate + NADP(+) = dihydroxyacetone phosphate + NADPH + H(+). The protein operates within membrane lipid metabolism; glycerophospholipid metabolism. Functionally, catalyzes the NAD(P)H-dependent reduction of dihydroxyacetonephosphate (DHAP or glycerone phosphate) to glycerol 1-phosphate (G1P). The G1P thus generated is used as the glycerophosphate backbone of phospholipids in the cellular membranes of Archaea. The chain is Glycerol-1-phosphate dehydrogenase [NAD(P)+] from Pyrobaculum arsenaticum (strain DSM 13514 / JCM 11321 / PZ6).